The sequence spans 713 residues: Vacuolar amino acid transporter 4 (713 aa).

The segment at 1-33 is disordered; that stretch reads MVTNNGDGEHLGIRRNGNLRHPSNNMKIPRRAQ. Over 1 to 242 the chain is Vacuolar; sequence MVTNNGDGEH…IDKVPFLTRN (242 aa). Residues 21–33 show a composition bias toward polar residues; sequence HPSNNMKIPRRAQ. Serine 88 is subject to Phosphoserine. Positions 99-121 are disordered; the sequence is RSSVSHGNEAIPRVNPTKNSSAS. 2 positions are modified to phosphoserine: serine 130 and serine 165. The interval 200 to 233 is disordered; sequence KRQEHQLNDSASSDFTSHESDSINQSSPSSNQDI. Residues 221–231 are compositionally biased toward low complexity; that stretch reads SINQSSPSSNQ. The helical transmembrane segment at 243–263 threads the bilayer; sequence FLEFLYVFGHFAGESFEDDFI. The Cytoplasmic segment spans residues 264–301; sequence PDSSNMMIRGEDERSALLSRPDHMKVLPSAKGTTSTKK. A helical transmembrane segment spans residues 302 to 322; sequence VFLILLKSFIGTGVLFLPNAF. Topologically, residues 323-326 are vacuolar; it reads HNGG. A helical membrane pass occupies residues 327 to 347; that stretch reads LFFSVSMLAFFGIYSYWCYYI. Residues 348 to 373 are Cytoplasmic-facing; that stretch reads LVQAKSSCGVSSFGDIGLKLYGPWMR. The helical transmembrane segment at 374-394 threads the bilayer; it reads IIILFSLVITQVGFSGAYMIF. The Vacuolar portion of the chain corresponds to 395–410; the sequence is TAKNLQAFLDNVFHVG. A helical membrane pass occupies residues 411–431; that stretch reads VLPLSYLMVFQTIIFIPLSFI. Over 432 to 438 the chain is Cytoplasmic; sequence RNISKLS. A helical membrane pass occupies residues 439–459; the sequence is LPSLLANFFIMAGLVIVIIFT. Residues 460–483 are Vacuolar-facing; sequence AKRLFFDLMGTPAMGVVYGLNADR. A helical transmembrane segment spans residues 484–504; that stretch reads WTLFIGTAIFAFEGIGLIIPV. The Cytoplasmic portion of the chain corresponds to 505–515; sequence QDSMRNPEKFP. The chain crosses the membrane as a helical span at residues 516-536; that stretch reads LVLALVILTATILFISIATLG. The Vacuolar segment spans residues 537–561; the sequence is YLAYGSNVQTVILLNLPQSNIFVNL. Residues 562–582 form a helical membrane-spanning segment; sequence IQLFYSIAIMLSTPLQLFPAI. The Cytoplasmic segment spans residues 583 to 621; that stretch reads KIIENKFFPKFTKIYVKHDDLTTRVELRPNSGKLNWKIK. A helical transmembrane segment spans residues 622–642; sequence WLKNFIRSIIVIIVVSIAYFG. The Vacuolar portion of the chain corresponds to 643–648; the sequence is SDNLDK. A helical membrane pass occupies residues 649-669; sequence FVSVIGSLACIPLVYIYPSML. Residues 670–692 lie on the Cytoplasmic side of the membrane; that stretch reads HLRGNSLPETKGEFWRFKPMLDT. Residues 693–711 form a helical membrane-spanning segment; the sequence is ILIFFGIASMLYTSYQSIF. Topologically, residues 712-713 are vacuolar; it reads GV.

Belongs to the amino acid/polyamine transporter 2 family.

Its subcellular location is the vacuole membrane. Functionally, involved in amino acid efflux from the vacuole to the cytoplasm. Capable of transporting large neutral amino acids including tyrosine, glutamine, asparagine, isoleucine and leucine. This is Vacuolar amino acid transporter 4 (AVT4) from Saccharomyces cerevisiae (strain ATCC 204508 / S288c) (Baker's yeast).